We begin with the raw amino-acid sequence, 649 residues long: Serine/threonine-protein kinase par-4 (649 aa).

Positions 1–11 (MEGPSSSSVPT) are enriched in polar residues. The segment at 1–132 (MEGPSSSSVP…DEEAETPEEQ (132 aa)) is disordered. Positions 45 to 55 (NTEKMEKEKKP) are enriched in basic and acidic residues. Acidic residues-rich tracts occupy residues 64 to 77 (PDYD…GSCE) and 117 to 129 (DDME…AETP). The Protein kinase domain occupies 197–460 (YLWGGIIGTG…ISDVMQHPWF (264 aa)). ATP-binding positions include 203–211 (IGTGSYGKV) and Lys-226. Asp-324 acts as the Proton acceptor in catalysis. Positions 548–649 (TLEKRPGDGP…CIFRSRTDSS (102 aa)) are disordered. Low complexity predominate over residues 597-609 (AVEVVEAVAAPEA).

This sequence belongs to the protein kinase superfamily. CAMK Ser/Thr protein kinase family. LKB1 subfamily. It depends on Mg(2+) as a cofactor. Mn(2+) is required as a cofactor.

It is found in the cytoplasm. The protein localises to the cell cortex. It catalyses the reaction L-seryl-[protein] + ATP = O-phospho-L-seryl-[protein] + ADP + H(+). It carries out the reaction L-threonyl-[protein] + ATP = O-phospho-L-threonyl-[protein] + ADP + H(+). Its function is as follows. Required for cytoplasmic partitioning and asymmetric cell division in early embryogenesis. Phosphorylates and restricts the asymmetry effectors mex-5 and mex-6 to the anterior cytoplasm of the zygote and maintains these phosphorylations until fertilization. Phosphorylates and regulates aak-2 in response to oxidative stress. May also play a role in motility, behavioral response, regulation of lifespan and dauer formation through this pathway. The polypeptide is Serine/threonine-protein kinase par-4 (Caenorhabditis briggsae).